The primary structure comprises 1064 residues: Ribosome quality control complex subunit NEMF (1064 aa).

At Thr7 the chain carries Phosphothreonine. The stretch at 296 to 359 forms a coiled coil; it reads VDEFYSKIEG…LIEMNLQIVD (64 aa). At Ser417 the chain carries Phosphoserine. The tract at residues 420-451 is disordered; that stretch reads EDGDGDASIENSDAEAPKGKKKKQKNKQLQKP. Over residues 438–447 the composition is skewed to basic residues; it reads GKKKKQKNKQ. Positions 481 to 512 form a coiled coil; the sequence is AAKKTQRTVEAAEKAFKSAEKKTKQTLKEVQT. Residues 694–707 are compositionally biased toward acidic residues; sequence EQLEGGDSSEEETE. Disordered regions lie at residues 694–718 and 731–973; these read EQLE…DVEL and SGRD…SLTG. The segment covering 731–756 has biased composition (basic and acidic residues); it reads SGRDELSSEDGEAKAVTKDQEPIGEM. Residue Ser737 is modified to Phosphoserine. The span at 771 to 781 shows a compositional bias: polar residues; sequence IDLSHLQSQRP. Residues 828–839 show a composition bias toward basic and acidic residues; sequence IEEKDKERESAV. A coiled-coil region spans residues 858-882; the sequence is KRGQKSKMKKMKEKYKDQDDEDREL. Residues 859 to 870 show a composition bias toward basic residues; it reads RGQKSKMKKMKE. The span at 947–959 shows a compositional bias: basic and acidic residues; that stretch reads DDPHDDKEEHDLD. Residues 960–973 show a composition bias toward polar residues; sequence QQGNEENLFDSLTG.

Belongs to the NEMF family. In terms of assembly, component of the ribosome quality control complex (RQC), composed of the E3 ubiquitin ligase LTN1, TCF25 and NEMF associated with the 60S ribosomal subunit. The complex probably also contains VCP/p97 and its ubiquitin-binding cofactors. Interacts (via its N-terminus) with XPO1.

The protein localises to the cytoplasm. It localises to the cytosol. Its subcellular location is the nucleus. Functionally, key component of the ribosome quality control complex (RQC), a ribosome-associated complex that mediates the extraction of incompletely synthesized nascent chains from stalled ribosomes as well as their ubiquitin-mediated proteasomal degradation. Thereby, frees 60S subunit ribosomes from the stalled translation complex and prevents the accumulation of nascent polypeptide chains that are potentially toxic for the cell. Within the RQC complex, NEMF specifically binds stalled 60S ribosomal subunits by recognizing an exposed, nascent chain-conjugated tRNA moiety and promotes the recruitment of LTN1 to stalled 60S subunits. Following binding to stalled 60S ribosomal subunits, NEMF mediates CAT tailing by recruiting alanine-charged tRNA to the A-site and directing the elongation of stalled nascent chains independently of mRNA or 40S subunits, leading to non-templated C-terminal alanine extensions (CAT tails). Mainly recruits alanine-charged tRNAs, but can also other amino acid-charged tRNAs. CAT tailing is required to promote ubiquitination of stalled nascent chains by different E3 ubiquitin-protein ligases. In the canonical RQC pathway (RQC-L), CAT tailing facilitates LTN1-dependent ubiquitination by exposing lysine residues that would otherwise remain buried in the ribosomal exit tunnel. In the alternative RQC pathway (RQC-C) CAT tailing creates an C-degron mainly composed of alanine that is recognized by the CRL2(KLHDC10) and RCHY1/PIRH2 E3 ligases, leading to ubiquitination and degradation of stalled nascent chains. NEMF may also indirectly play a role in nuclear export. This Mus musculus (Mouse) protein is Ribosome quality control complex subunit NEMF.